The following is a 692-amino-acid chain: Proprotein convertase subtilisin/kexin type 9 (692 aa).

Residues 1 to 30 (MGTVSSRRSWWPLPLPLLLLLLLGPAGARA) form the signal peptide. A propeptide spanning residues 31–152 (QEDEDGDYEE…IEEDSSVFAQ (122 aa)) is cleaved from the precursor. Tyr38 carries the post-translational modification Sulfotyrosine. Position 47 is a phosphoserine (Ser47). In terms of domain architecture, Inhibitor I9 spans 77 to 149 (TYVVVLKEET…VDYIEEDSSV (73 aa)). Residues 155-444 (PWNLERITPA…VLTPNLVAAL (290 aa)) enclose the Peptidase S8 domain. Residues Asp186 and His226 each act as charge relay system in the active site. Cystine bridges form between Cys223-Cys255 and Cys323-Cys358. The active-site Charge relay system is Ser386. The C-terminal domain stretch occupies residues 450 to 692 (RAGWQLFCRT…HLVQASQELQ (243 aa)). Disulfide bonds link Cys457–Cys527, Cys477–Cys526, and Cys486–Cys509. A glycan (N-linked (GlcNAc...) asparagine) is linked at Asn533. Disulfide bonds link Cys534–Cys601, Cys552–Cys600, Cys562–Cys588, Cys608–Cys679, Cys626–Cys678, and Cys635–Cys654. Position 688 is a phosphoserine (Ser688).

This sequence belongs to the peptidase S8 family. Monomer. Can self-associate to form dimers and higher multimers which may have increased LDLR degrading activity. The precursor protein but not the mature protein may form multimers. Interacts with APOB, VLDLR, LRP8/APOER2 and BACE1. The full-length immature form (pro-PCSK9) interacts with SCNN1A, SCNN1B and SCNN1G. The pro-PCSK9 form (via C-terminal domain) interacts with LDLR. Interacts (via the C-terminal domain) with ANXA2 (via repeat Annexin 1); the interaction inhibits the degradation of LDLR. Requires Ca(2+) as cofactor. Cleavage by furin and PCSK5 generates a truncated inactive protein that is unable to induce LDLR degradation. In terms of processing, undergoes autocatalytic cleavage in the endoplasmic reticulum to release the propeptide from the N-terminus and the cleavage of the propeptide is strictly required for its maturation and activation. The cleaved propeptide however remains associated with the catalytic domain through non-covalent interactions, preventing potential substrates from accessing its active site. As a result, it is secreted from cells as a propeptide-containing, enzymatically inactive protein. Post-translationally, phosphorylation protects the propeptide against proteolysis.

The protein resides in the cytoplasm. It localises to the secreted. Its subcellular location is the endosome. It is found in the lysosome. The protein localises to the cell surface. The protein resides in the endoplasmic reticulum. It localises to the golgi apparatus. Its proteolytic activity is autoinhibited by the non-covalent binding of the propeptide to the catalytic domain. Inhibited by EGTA. Crucial player in the regulation of plasma cholesterol homeostasis. Binds to low-density lipid receptor family members: low density lipoprotein receptor (LDLR), very low density lipoprotein receptor (VLDLR), apolipoprotein E receptor (LRP1/APOER) and apolipoprotein receptor 2 (LRP8/APOER2), and promotes their degradation in intracellular acidic compartments. Acts via a non-proteolytic mechanism to enhance the degradation of the hepatic LDLR through a clathrin LDLRAP1/ARH-mediated pathway. May prevent the recycling of LDLR from endosomes to the cell surface or direct it to lysosomes for degradation. Can induce ubiquitination of LDLR leading to its subsequent degradation. Inhibits intracellular degradation of APOB via the autophagosome/lysosome pathway in a LDLR-independent manner. Involved in the disposal of non-acetylated intermediates of BACE1 in the early secretory pathway. Inhibits epithelial Na(+) channel (ENaC)-mediated Na(+) absorption by reducing ENaC surface expression primarily by increasing its proteasomal degradation. Regulates neuronal apoptosis via modulation of LRP8/APOER2 levels and related anti-apoptotic signaling pathways. The sequence is that of Proprotein convertase subtilisin/kexin type 9 (PCSK9) from Macaca nemestrina (Pig-tailed macaque).